A 343-amino-acid chain; its full sequence is Small ribosomal subunit biogenesis GTPase RsgA (343 aa).

The region spanning 116 to 275 (RGQLKPVAAN…LIDSPGIREF (160 aa)) is the CP-type G domain. GTP-binding positions include 163–166 (NKAD) and 217–225 (GQSGVGKSS). The Zn(2+) site is built by Cys-299, Cys-304, His-306, and Cys-312.

This sequence belongs to the TRAFAC class YlqF/YawG GTPase family. RsgA subfamily. As to quaternary structure, monomer. Associates with 30S ribosomal subunit, binds 16S rRNA. Requires Zn(2+) as cofactor.

It localises to the cytoplasm. In terms of biological role, one of several proteins that assist in the late maturation steps of the functional core of the 30S ribosomal subunit. Helps release RbfA from mature subunits. May play a role in the assembly of ribosomal proteins into the subunit. Circularly permuted GTPase that catalyzes slow GTP hydrolysis, GTPase activity is stimulated by the 30S ribosomal subunit. In Azotobacter vinelandii (strain DJ / ATCC BAA-1303), this protein is Small ribosomal subunit biogenesis GTPase RsgA.